The primary structure comprises 231 residues: Phosphoribosylformylglycinamidine synthase subunit PurQ (231 aa).

Residues 7–231 (GVVVFPGSNC…RLFASLFRQL (225 aa)) form the Glutamine amidotransferase type-1 domain. The active-site Nucleophile is the C89. Active-site residues include H206 and E208.

In terms of assembly, part of the FGAM synthase complex composed of 1 PurL, 1 PurQ and 2 PurS subunits.

It localises to the cytoplasm. The enzyme catalyses N(2)-formyl-N(1)-(5-phospho-beta-D-ribosyl)glycinamide + L-glutamine + ATP + H2O = 2-formamido-N(1)-(5-O-phospho-beta-D-ribosyl)acetamidine + L-glutamate + ADP + phosphate + H(+). It carries out the reaction L-glutamine + H2O = L-glutamate + NH4(+). Its pathway is purine metabolism; IMP biosynthesis via de novo pathway; 5-amino-1-(5-phospho-D-ribosyl)imidazole from N(2)-formyl-N(1)-(5-phospho-D-ribosyl)glycinamide: step 1/2. Functionally, part of the phosphoribosylformylglycinamidine synthase complex involved in the purines biosynthetic pathway. Catalyzes the ATP-dependent conversion of formylglycinamide ribonucleotide (FGAR) and glutamine to yield formylglycinamidine ribonucleotide (FGAM) and glutamate. The FGAM synthase complex is composed of three subunits. PurQ produces an ammonia molecule by converting glutamine to glutamate. PurL transfers the ammonia molecule to FGAR to form FGAM in an ATP-dependent manner. PurS interacts with PurQ and PurL and is thought to assist in the transfer of the ammonia molecule from PurQ to PurL. The polypeptide is Phosphoribosylformylglycinamidine synthase subunit PurQ (Chlorobium luteolum (strain DSM 273 / BCRC 81028 / 2530) (Pelodictyon luteolum)).